A 172-amino-acid polypeptide reads, in one-letter code: Antibacterial protein PR-39 (172 aa).

Positions 1-29 (METQRASLCLGRWSLWLLLLGLVVPSASA) are cleaved as a signal peptide. Pyrrolidone carboxylic acid is present on Gln-30. The propeptide occupies 30-130 (QALSYREAVL…DISCNEIQSV (101 aa)). The tract at residues 61-80 (DQPPKADEDPGTPKPVSFTV) is disordered. Disulfide bonds link Cys-85/Cys-96 and Cys-107/Cys-124. The interval 130–172 (VRRRPRPPYLPRPRPPPFFPPRLPPRIPPGFPPRFPPRFPGKR) is disordered. Pro residues predominate over residues 136–172 (PPYLPRPRPPPFFPPRLPPRIPPGFPPRFPPRFPGKR). Pro-169 carries the proline amide modification.

It belongs to the cathelicidin family. Small intestine and bone marrow.

It localises to the secreted. In terms of biological role, exerts a potent antimicrobial activity against both E.coli and B.megaterium. The chain is Antibacterial protein PR-39 (PR39) from Sus scrofa (Pig).